The primary structure comprises 434 residues: MYDYHQPDLAGHFGIYGGSFVSETLTHAINELKDAYARYQNDPKFLAEFNYELKHFVGRPSPIYHAARMSREQGGAQIYLKREDLNHTGAHKINNTIGQAMLARRMGKQRIIAETGAGQHGVATATICARYGLECVVYMGSEDVKRQSPNVYRMNLLGATVVPVESGSKTLKDALNEAMRDWVANVDNTFYIIGTVAGPHPYPMMVRDFQSVIGTECLSQMPEMNAGRQPDAVVACVGGGSNAMGIFHPYIAHENTRLIGVEAAGEGLDSGKHSASLQRGLPGVLHGNRTYVLQNDDGQVTETHSISAGLDYPGVGPEHAYLKDIGRAEYVGITDTEALQAFHYLCRTEGIIPALESAHAVAYAMKLAKTMRSDQSILVNLSGRGDKDIGTVADLSGADFYDRPSMRGLGVKGGVATSPESFDASGAKGAGSQS.

Lys92 is subject to N6-(pyridoxal phosphate)lysine. Residues 411–434 are disordered; it reads VKGGVATSPESFDASGAKGAGSQS.

It belongs to the TrpB family. In terms of assembly, tetramer of two alpha and two beta chains. Pyridoxal 5'-phosphate is required as a cofactor.

It carries out the reaction (1S,2R)-1-C-(indol-3-yl)glycerol 3-phosphate + L-serine = D-glyceraldehyde 3-phosphate + L-tryptophan + H2O. It functions in the pathway amino-acid biosynthesis; L-tryptophan biosynthesis; L-tryptophan from chorismate: step 5/5. The beta subunit is responsible for the synthesis of L-tryptophan from indole and L-serine. In Polaromonas naphthalenivorans (strain CJ2), this protein is Tryptophan synthase beta chain.